Reading from the N-terminus, the 139-residue chain is Probable disulfide formation protein C 1 (139 aa).

Residues 8–27 (EYALFTAWGASFIATLGSLY) traverse the membrane as a helical segment. A disulfide bridge links C37 with C40. 2 helical membrane-spanning segments follow: residues 42 to 61 (YQRI…VVKK) and 68 to 85 (YSLP…YHYV). Cysteines 99 and 104 form a disulfide. The helical transmembrane segment at 113–135 (GFVTIPFLALIGFITIAVCSFIV) threads the bilayer.

It belongs to the DsbB family. BdbC subfamily.

Its subcellular location is the cell membrane. Functionally, required for disulfide bond formation in some proteins. The protein is Probable disulfide formation protein C 1 (bdbC1) of Bacillus anthracis.